The primary structure comprises 290 residues: 4-hydroxy-tetrahydrodipicolinate synthase (290 aa).

Residue S44 coordinates pyruvate. Residue Y132 is the Proton donor/acceptor of the active site. The active-site Schiff-base intermediate with substrate is the K161. Position 202 (V202) interacts with pyruvate.

This sequence belongs to the DapA family. As to quaternary structure, homotetramer; dimer of dimers.

The protein resides in the cytoplasm. It carries out the reaction L-aspartate 4-semialdehyde + pyruvate = (2S,4S)-4-hydroxy-2,3,4,5-tetrahydrodipicolinate + H2O + H(+). It participates in amino-acid biosynthesis; L-lysine biosynthesis via DAP pathway; (S)-tetrahydrodipicolinate from L-aspartate: step 3/4. Functionally, catalyzes the condensation of (S)-aspartate-beta-semialdehyde [(S)-ASA] and pyruvate to 4-hydroxy-tetrahydrodipicolinate (HTPA). The protein is 4-hydroxy-tetrahydrodipicolinate synthase of Hydrogenobaculum sp. (strain Y04AAS1).